We begin with the raw amino-acid sequence, 427 residues long: Cyclic 2,3-diphosphoglycerate synthetase (427 aa).

This sequence belongs to the cyclic 2,3-diphosphoglycerate synthetase family.

Its subcellular location is the cytoplasm. It catalyses the reaction (2R)-2,3-bisphosphoglycerate + ATP + H(+) = cyclic (2R)-2,3-bisphosphoglycerate + ADP + phosphate. Functionally, catalyzes the formation of cyclic 2,3-diphosphoglycerate (cDPG) by formation of an intramolecular phosphoanhydride bond at the expense of ATP. The protein is Cyclic 2,3-diphosphoglycerate synthetase of Pyrococcus abyssi (strain GE5 / Orsay).